The primary structure comprises 704 residues: ATP-dependent zinc metalloprotease FTSH 5, chloroplastic (704 aa).

The N-terminal 58 residues, methionine 1–serine 58, are a transit peptide targeting the chloroplast. The N-terminal 18 residues, glutamine 59 to alanine 76, are a transit peptide targeting the thylakoid. A helical transmembrane segment spans residues phenylalanine 193–phenylalanine 213. Glycine 290–threonine 297 is a binding site for ATP. Histidine 512 serves as a coordination point for Zn(2+). Residue glutamate 513 is part of the active site. Residues histidine 516 and aspartate 593 each coordinate Zn(2+).

This sequence in the N-terminal section; belongs to the AAA ATPase family. The protein in the C-terminal section; belongs to the peptidase M41 family. As to quaternary structure, heterohexamers with FTSH1, FTSH2 and FTSH8. It depends on Zn(2+) as a cofactor. As to expression, ubiquitous.

Its subcellular location is the plastid. It is found in the chloroplast thylakoid membrane. In terms of biological role, part of a complex that function as an ATP-dependent zinc metallopeptidase. Involved in the thylakoid formation and in the removal of damaged D1 in the photosystem II, preventing cell death under high-intensity light conditions. Not involved in the degradation of the light-harvesting complex of photosystem II (LHC II) or in thermotolerance. The chain is ATP-dependent zinc metalloprotease FTSH 5, chloroplastic (FTSH5) from Arabidopsis thaliana (Mouse-ear cress).